The sequence spans 620 residues: MALLQIAEPGQSAAPHQHRLAVGIDLGTTNSLVAAVRSGVTATLPDENGQHSLPSIVRYTQDGIEVGQVAALSSAQDPKNTIVSVKRFMGRSLTDIQSGEQAFPYQFEASENGLPLFVTPQGQVNPVQVSAEILRPLVERAEKTLGGELQGVVITVPAYFDDAQRQGTKDAASLLGVKVLRLLNEPTAAAIAYGLDSKQEGVIAIYDLGGGTFDISILRLNRGVFEVLATGGDSALGGDDFDHLLQAHMQQVWQLTNLDPQLSRQLLIEARRVKEALTDASDVEASLTLADGTVLKQVVTKAEFDNLISALVKKTIASCRRTLRDAGVTADEVLETVMVGGSTRVPLVREQVEAFFGKAPLTSIDPDRVVAIGAAIQADILVGNKPESELLLLDVIPLSLGIETMGGLVEKVVSRNTTIPVARAQEFTTFKDGQTAMAFHVVQGERELVDDCRSLARFTLKGIPPLAAGAAHIRVTFQVDADGLLSVTAMEKSTGVQSSIQVKPSFGLSDTEIATMLKDSMKHAKEDISRRMLAEQQVEAARVLESLNAALAKDGDLLTSDERQQIDAVMAQLAEIARGDDADAIKQAIEVLDEHTQDFAAKRMDNSIRVAFKGQSIDNI.

This sequence belongs to the heat shock protein 70 family.

Its function is as follows. Chaperone involved in the maturation of iron-sulfur cluster-containing proteins. Has a low intrinsic ATPase activity which is markedly stimulated by HscB. This chain is Chaperone protein HscA homolog, found in Shewanella sp. (strain MR-4).